The primary structure comprises 394 residues: Probable malate--CoA ligase subunit beta (394 aa).

One can recognise an ATP-grasp domain in the interval 9-244 (KELLARHGVH…KSQEDPRETF (236 aa)). Lys-46, Glu-99, Val-102, and Glu-107 together coordinate ATP. 2 residues coordinate Mg(2+): Asn-199 and Asp-213.

Belongs to the succinate/malate CoA ligase beta subunit family. As to quaternary structure, heterotetramer of two alpha and two beta subunits. Mg(2+) is required as a cofactor.

The enzyme catalyses (S)-malate + ATP + CoA = (S)-malyl-CoA + ADP + phosphate. It participates in one-carbon metabolism; formaldehyde assimilation via serine pathway. The sequence is that of Probable malate--CoA ligase subunit beta (mtkA) from Mesorhizobium japonicum (strain LMG 29417 / CECT 9101 / MAFF 303099) (Mesorhizobium loti (strain MAFF 303099)).